The chain runs to 1216 residues: Phospholipase D B (1216 aa).

Residues 1–14 are compositionally biased toward polar residues; that stretch reads MNLSQEHAINQNLH. The interval 1–48 is disordered; sequence MNLSQEHAINQNLHKNQKNEEKIEKKTINKDGRGQMNYDGEEGQGEKS. Residues 17-33 are compositionally biased toward basic and acidic residues; that stretch reads QKNEEKIEKKTINKDGR. EF-hand domains lie at 196-231 and 232-267; these read RNAD…MCRG and TKKE…ISDI. Residues D209, N211, D213, K215, and E220 each coordinate Ca(2+). One can recognise a PH domain in the interval 347–462; that stretch reads EINMNGQLTK…WVNAIRFHSR (116 aa). One can recognise a PLD phosphodiesterase 1 domain in the interval 585 to 612; that stretch reads LSWSHHQKNAIIDQQIAFVGGIDICLMR. Catalysis depends on residues H590, K592, and D597. A disordered region spans residues 732–844; sequence VSYGREKPTH…GLKSKNYKNN (113 aa). The segment covering 776 to 789 has biased composition (low complexity); the sequence is NNSTNSENSENSYS. The segment covering 790–813 has biased composition (acidic residues); the sequence is EFDEEDEEGNQEEEDEDEFDEFEK. The 28-residue stretch at 1036-1063 folds into the PLD phosphodiesterase 2 domain; sequence EQIYVHSKVLIVDDRVAVIGSCNINDRS. Catalysis depends on residues H1041, K1043, and D1048.

Belongs to the phospholipase D family.

It localises to the cytoplasmic vesicle. The protein localises to the cytoplasm. It is found in the cell cortex. The enzyme catalyses a 1,2-diacyl-sn-glycero-3-phosphocholine + H2O = a 1,2-diacyl-sn-glycero-3-phosphate + choline + H(+). Inhibited by butan-1-ol. Its function is as follows. Plays a role in cell growth. Hydrolyzes membrane phospholipids, such as PtdCho (phosphatidylcholine), producing the free headgroup and PtdOH (phosphatidic acid; signaling molecule on its own). Involved in the inhibition of actin-based motility and endocytosis. Its inhibition causes complete collapse of F-actin organization. Plays an important role in cell migration by localizing along the anterior cell membrane. Overexpression leads to the inability to aggregate even at higher cell density. Also known as a negative regulator of quorum sensing. This chain is Phospholipase D B (pldB), found in Dictyostelium discoideum (Social amoeba).